A 329-amino-acid polypeptide reads, in one-letter code: Stimulator of interferon genes protein (329 aa).

The Cytoplasmic segment spans residues 1–4; sequence MACV. Residues 5–25 form a helical membrane-spanning segment; that stretch reads LAIGSILFVWILGKGKYSGAQ. Residue leucine 26 is a topological domain, lumenal. The helical transmembrane segment at 27 to 52 threads the bilayer; it reads IYRMATNFAISQGCCLVTCACELTEE. Topologically, residues 53–74 are cytoplasmic; the sequence is IKHLHTRYNGHYWRALKASFNL. A helical membrane pass occupies residues 75–88; it reads SCAAFVTAILCYVF. At 89-98 the chain is on the lumenal side; sequence YEPKLMASLP. A helical transmembrane segment spans residues 99–116; that stretch reads LTIDITLTLLSWLFCWIL. Topologically, residues 117–329 are cytoplasmic; it reads GIQGPTPATI…QQHSEEYSML (213 aa). Positions 135-325 are cyclic dinucleotide-binding domain (CBD); sequence LNVAHGLAWS…KHIRQQHSEE (191 aa). 4 residues coordinate 2',3'-cGAMP: serine 144, tyrosine 149, arginine 220, and threonine 245. Residues serine 144, tyrosine 149, 220–223, and threonine 245 each bind 3',3'-c-di-GMP; that span reads RVFK.

The protein belongs to the STING family. Homodimer; forms a homodimer in absence of cyclic nucleotide (c-di-GMP or cGAMP). Homotetramer; in presence of cyclic nucleotide (c-di-GMP or cGAMP), forms tetramers and higher-order oligomers through side-by-side packing.

It localises to the endoplasmic reticulum membrane. Its subcellular location is the cytoplasm. It is found in the perinuclear region. The protein resides in the endoplasmic reticulum-Golgi intermediate compartment membrane. The protein localises to the golgi apparatus membrane. It localises to the cytoplasmic vesicle. Its subcellular location is the autophagosome membrane. The enzyme catalyses H(+)(in) = H(+)(out). Sensor of cytosolic DNA from bacteria and viruses that promotes autophagy. Acts by recognizing and binding cyclic GMP-AMP (cGAMP), a messenger produced by CGAS in response to DNA in the cytosol. Exhibits guanine base-specific ligand recognition: binds 3'-3'linked cGAMP, 2'-3' linked cGAMP and 3'-3' linked c-di-GMP with much greater affinity as compared to 3'-3' linked c-di-AMP. Following cGAMP-binding, promotes the formation of autophagosomes, leading to target cytosolic DNA for degradation by the lysosome. Promotes autophagy by acting as a proton channel that directs proton efflux from the Golgi to facilitate LC3 lipidation. Lacks the C-terminal tail (CTT) found in other vertebrate orthologs which is essential for interferon signaling. In Xenopus tropicalis (Western clawed frog), this protein is Stimulator of interferon genes protein.